The primary structure comprises 318 residues: Trans-prenyltransferase (318 aa).

The helical transmembrane segment at 1 to 21 threads the bilayer; the sequence is MLHLIYISIIVVLIIILISYT. Isopentenyl diphosphate contacts are provided by Lys-85, Arg-88, and His-122. Mg(2+)-binding residues include Asp-129 and Asp-135. Arg-140 contacts dimethylallyl diphosphate. Residue Arg-141 participates in isopentenyl diphosphate binding. Lys-216, Thr-217, and Gln-254 together coordinate dimethylallyl diphosphate.

The protein belongs to the FPP/GGPP synthase family. Asfivirus trans-prenyltransferase subfamily. Mg(2+) is required as a cofactor.

Its subcellular location is the host endoplasmic reticulum. It is found in the host membrane. The enzyme catalyses isopentenyl diphosphate + dimethylallyl diphosphate = (2E)-geranyl diphosphate + diphosphate. It catalyses the reaction isopentenyl diphosphate + (2E)-geranyl diphosphate = (2E,6E)-farnesyl diphosphate + diphosphate. It carries out the reaction isopentenyl diphosphate + (2E,6E)-farnesyl diphosphate = (2E,6E,10E)-geranylgeranyl diphosphate + diphosphate. The catalysed reaction is isopentenyl diphosphate + (2E,6E,10E)-geranylgeranyl diphosphate = (2E,6E,10E,14E)-geranylfarnesyl diphosphate + diphosphate. It functions in the pathway isoprenoid biosynthesis; farnesyl diphosphate biosynthesis; farnesyl diphosphate from geranyl diphosphate and isopentenyl diphosphate: step 1/1. The protein operates within isoprenoid biosynthesis; geranyl diphosphate biosynthesis; geranyl diphosphate from dimethylallyl diphosphate and isopentenyl diphosphate: step 1/1. Its pathway is isoprenoid biosynthesis; geranylgeranyl diphosphate biosynthesis; geranylgeranyl diphosphate from farnesyl diphosphate and isopentenyl diphosphate: step 1/1. Trans-prenyltransferase that catalyzes the sequential condensation of isopentenyl diphosphate (IPP) with different allylic diphosphates, such as dimethylallyl diphosphate (DMAPP), geranyl diphosphate (GPP), farnesyl diphosphate (FPP) and geranylgeranyl diphosphate (GGPP), farnesyl diphosphate being the best allylic substrate. This chain is Trans-prenyltransferase, found in African swine fever virus (isolate Warthog/Namibia/Wart80/1980) (ASFV).